The primary structure comprises 557 residues: Aerobic glycerol-3-phosphate dehydrogenase (557 aa).

Residue 21–49 coordinates FAD; the sequence is DLVIIGGGITGAGIALDASERGMKVALVE.

The protein belongs to the FAD-dependent glycerol-3-phosphate dehydrogenase family. It depends on FAD as a cofactor.

The protein localises to the cytoplasm. It catalyses the reaction a quinone + sn-glycerol 3-phosphate = dihydroxyacetone phosphate + a quinol. It participates in polyol metabolism; glycerol degradation via glycerol kinase pathway; glycerone phosphate from sn-glycerol 3-phosphate (aerobic route): step 1/1. The chain is Aerobic glycerol-3-phosphate dehydrogenase (glpD) from Staphylococcus aureus (strain USA300).